A 353-amino-acid chain; its full sequence is Ribosomal RNA small subunit methyltransferase H (353 aa).

Residues 50–52, Asp-69, Phe-96, Asp-117, and Gln-124 contribute to the S-adenosyl-L-methionine site; that span reads GGY. The disordered stretch occupies residues 276–353; the sequence is AAQASRHVPG…PAPQGRGPRR (78 aa).

It belongs to the methyltransferase superfamily. RsmH family.

Its subcellular location is the cytoplasm. It catalyses the reaction cytidine(1402) in 16S rRNA + S-adenosyl-L-methionine = N(4)-methylcytidine(1402) in 16S rRNA + S-adenosyl-L-homocysteine + H(+). Specifically methylates the N4 position of cytidine in position 1402 (C1402) of 16S rRNA. In Methylorubrum extorquens (strain CM4 / NCIMB 13688) (Methylobacterium extorquens), this protein is Ribosomal RNA small subunit methyltransferase H.